The primary structure comprises 303 residues: N-acetyl-D-glucosamine kinase (303 aa).

ATP contacts are provided by residues 4 to 11 (GFDVGGTK) and 133 to 140 (GFGGGLIF). Histidine 157, cysteine 177, cysteine 179, and cysteine 184 together coordinate Zn(2+).

It belongs to the ROK (NagC/XylR) family. NagK subfamily.

It carries out the reaction N-acetyl-D-glucosamine + ATP = N-acetyl-D-glucosamine 6-phosphate + ADP + H(+). It participates in cell wall biogenesis; peptidoglycan recycling. Its function is as follows. Catalyzes the phosphorylation of N-acetyl-D-glucosamine (GlcNAc) derived from cell-wall degradation, yielding GlcNAc-6-P. The chain is N-acetyl-D-glucosamine kinase from Aliivibrio fischeri (strain ATCC 700601 / ES114) (Vibrio fischeri).